A 385-amino-acid chain; its full sequence is Glucans biosynthesis protein C (385 aa).

The next 10 helical transmembrane spans lie at 17–37 (AWLM…SHTW), 60–80 (MQVF…RYPL), 91–111 (VGIP…IMLQ), 137–157 (ISHL…VWIF), 173–193 (KFSM…YAVI), 212–232 (FIVM…LAFI), 239–259 (LFTT…VAYL), 274–294 (TESV…FSFG), 311–331 (ASLF…AYIT), and 338–358 (WLGF…LYEI).

This sequence belongs to the acyltransferase 3 family. OpgC subfamily.

It is found in the cell membrane. The protein operates within glycan metabolism; osmoregulated periplasmic glucan (OPG) biosynthesis. Necessary for the succinyl substitution of periplasmic glucans. Could catalyze the transfer of succinyl residues from the cytoplasmic side of the membrane to the nascent glucan backbones on the periplasmic side of the membrane. This chain is Glucans biosynthesis protein C, found in Escherichia coli O17:K52:H18 (strain UMN026 / ExPEC).